The chain runs to 210 residues: Synaptosomal-associated protein 23 (210 aa).

Residue Met1 is modified to N-acetylmethionine. Phosphoserine is present on residues Ser5, Ser20, Ser23, and Ser34. In terms of domain architecture, t-SNARE coiled-coil homology 1 spans 14–76 (HQVTDESLES…REAEKTLTEL (63 aa)). A coiled-coil region spans residues 23–76 (STRRILGLAIESQDAGIKTITMLDEQGEQLNRIEEGMDQINKDMREAEKTLTEL). S-palmitoyl cysteine attachment occurs at residues Cys79, Cys80, Cys83, Cys85, and Cys87. The interval 104 to 135 (GDGGDNSPSNVVSKQPSRITNGQPQQTTGAAS) is disordered. A compositionally biased stretch (polar residues) spans 109 to 133 (NSPSNVVSKQPSRITNGQPQQTTGA). Phosphoserine is present on residues Ser110 and Ser160. A t-SNARE coiled-coil homology 2 domain is found at 145–207 (DAREDEMEEN…DIANTRAKKL (63 aa)).

Belongs to the SNAP-25 family. As to quaternary structure, homotetramer (via coiled-coil domain), also forms heterotetramers with STX4 and VAMP3. Found in a complex with VAMP8 and STX1A. Found in a complex with VAMP8 and STX4 in pancreas. Interacts simultaneously with SNAPIN and SYN4. Interacts with STX1A. Interacts with STX12. Interacts tightly to multiple syntaxins and synaptobrevins/VAMPs. Interacts with ZDHHC13 (via ANK repeats). Interacts with ZDHHC17 (via ANK repeats). Post-translationally, (Microbial infection) Targeted and hydrolyzed by C.botulinum neurotoxin type A (BoNT/A, botA) which hydrolyzes the 202-Thr-|-Arg-203 bond; the in vitro reaction is not highly efficient. In terms of processing, (Microbial infection) Targeted and hydrolyzed by C.botulinum neurotoxin type E (BoNT/E) which hydrolyzes the 185-Arg-|-Ile-186 bond; the in vitro reaction is more efficient than that of BoNT/A. As to expression, expressed in non-neuronal tissues.

The protein resides in the cell membrane. Its subcellular location is the synapse. It is found in the synaptosome. Functionally, essential component of the high affinity receptor for the general membrane fusion machinery and an important regulator of transport vesicle docking and fusion. The polypeptide is Synaptosomal-associated protein 23 (Snap23) (Mus musculus (Mouse)).